Consider the following 142-residue polypeptide: Hydrogenase maturation factor HypA (142 aa).

Position 2 (H2) interacts with Ni(2+). Residues C73, C76, C109, and C112 each contribute to the Zn(2+) site.

This sequence belongs to the HypA/HybF family.

Its function is as follows. Involved in the maturation of [NiFe] hydrogenases. Required for nickel insertion into the metal center of the hydrogenase. The protein is Hydrogenase maturation factor HypA of Methanopyrus kandleri (strain AV19 / DSM 6324 / JCM 9639 / NBRC 100938).